The chain runs to 363 residues: Protein Wnt-5 (363 aa).

The N-terminal stretch at Met1–Met27 is a signal peptide. 2 N-linked (GlcNAc...) asparagine glycosylation sites follow: Asn48 and Asn98. 11 disulfides stabilise this stretch: Cys88–Cys99, Cys137–Cys145, Cys147–Cys165, Cys221–Cys235, Cys223–Cys230, Cys292–Cys323, Cys308–Cys318, Cys322–Cys362, Cys338–Cys353, Cys340–Cys350, and Cys345–Cys346. Ser227 is lipidated: O-palmitoleoyl serine; by PORCN.

Belongs to the Wnt family. In terms of processing, palmitoleoylation is required for efficient binding to frizzled receptors. Depalmitoleoylation leads to Wnt signaling pathway inhibition.

It localises to the secreted. Its subcellular location is the extracellular space. The protein localises to the extracellular matrix. In terms of biological role, ligand for members of the frizzled family of seven transmembrane receptors. Probable developmental protein. May be a signaling molecule which affects the development of discrete regions of tissues. Is likely to signal over only few cell diameters. The polypeptide is Protein Wnt-5 (WNT5) (Halocynthia roretzi (Sea squirt)).